A 184-amino-acid polypeptide reads, in one-letter code: Large ribosomal subunit protein uL6 (184 aa).

Belongs to the universal ribosomal protein uL6 family. In terms of assembly, part of the 50S ribosomal subunit.

Functionally, this protein binds to the 23S rRNA, and is important in its secondary structure. It is located near the subunit interface in the base of the L7/L12 stalk, and near the tRNA binding site of the peptidyltransferase center. In Amoebophilus asiaticus (strain 5a2), this protein is Large ribosomal subunit protein uL6.